A 761-amino-acid chain; its full sequence is Semaphorin-3D (761 aa).

The signal sequence occupies residues 1-24 (MRASQVPNACSLLSLAMLFFPVTG). The Sema domain occupies 32–519 (RLKLSYKDLL…SRDGLVQLSL (488 aa)). Cysteines 105 and 116 form a disulfide. Residue asparagine 127 is glycosylated (N-linked (GlcNAc...) asparagine). Cystine bridges form between cysteine 134–cysteine 143, cysteine 274–cysteine 386, cysteine 298–cysteine 346, and cysteine 522–cysteine 540. Residues 552-670 (PTSKRRARRQ…IHTIVKLNLN (119 aa)) enclose the Ig-like C2-type domain. Asparagine 595 is a glycosylation site (N-linked (GlcNAc...) asparagine). Cysteine 653 and cysteine 719 are disulfide-bonded. Positions 728-754 (RRQRNKGGAKWKHVQEMKKKRNRRHHE) are enriched in basic residues. The interval 728–761 (RRQRNKGGAKWKHVQEMKKKRNRRHHEPARPPST) is disordered.

This sequence belongs to the semaphorin family. In terms of tissue distribution, developing spinal cord and developing visual system. Collapsin-1, -2, -3, and -5 bind to overlapping but distinct axon tracts.

The protein localises to the secreted. Its function is as follows. Induces the collapse and paralysis of neuronal growth cones. Could potentially act as repulsive cues toward specific neuronal populations. Binds to neuropilin. The sequence is that of Semaphorin-3D (SEMA3D) from Gallus gallus (Chicken).